The chain runs to 472 residues: Adenylyl cyclase-associated protein 1 (472 aa).

N-acetylalanine is present on A2. A Phosphotyrosine modification is found at Y31. The residue at position 34 (S34) is a Phosphoserine. K81 is modified (N6-acetyllysine). The segment at 216 to 253 (ELSGLPSGPSAGSGPPPPPPGPPPPPVPTSSGSDDSAS) is disordered. A compositionally biased stretch (low complexity) spans 218–228 (SGLPSGPSAGS). Positions 229-243 (GPPPPPPGPPPPPVP) are enriched in pro residues. Low complexity predominate over residues 244 to 253 (TSSGSDDSAS). K287 bears the N6-methyllysine mark. A phosphoserine mark is found at S290, S295, and S301. The disordered stretch occupies residues 290–312 (SGLIRSGPKPFSASKPDPPKPVA). The region spanning 307–450 (PPKPVAKKEP…EGGDFNEFPV (144 aa)) is the C-CAP/cofactor C-like domain. K345 participates in a covalent cross-link: Glycyl lysine isopeptide (Lys-Gly) (interchain with G-Cter in SUMO1).

The protein belongs to the CAP family. As to quaternary structure, homodimer. Binds actin monomers.

The protein resides in the cell membrane. In terms of biological role, directly regulates filament dynamics and has been implicated in a number of complex developmental and morphological processes, including mRNA localization and the establishment of cell polarity. The chain is Adenylyl cyclase-associated protein 1 (CAP1) from Bos taurus (Bovine).